We begin with the raw amino-acid sequence, 243 residues long: ATP synthase subunit a, chloroplastic (243 aa).

5 helical membrane passes run 32-52 (GQVL…SFVG), 96-116 (TVFL…WALI), 129-149 (DINT…YAGI), 195-215 (LVVG…IMLL), and 216-236 (GCFT…AYIG).

It belongs to the ATPase A chain family. As to quaternary structure, F-type ATPases have 2 components, CF(1) - the catalytic core - and CF(0) - the membrane proton channel. CF(1) has five subunits: alpha(3), beta(3), gamma(1), delta(1), epsilon(1). CF(0) has four main subunits: a, b, b' and c.

The protein localises to the plastid. It is found in the chloroplast thylakoid membrane. Functionally, key component of the proton channel; it plays a direct role in the translocation of protons across the membrane. The sequence is that of ATP synthase subunit a, chloroplastic from Tetradesmus obliquus (Green alga).